The following is a 132-amino-acid chain: S-protein homolog 8 (132 aa).

An N-terminal signal peptide occupies residues 1 to 20 (MHSLSWFLLVIGLSVGLSSG).

This sequence belongs to the plant self-incompatibility (S1) protein family. Mostly expressed in seedlings, stems, leaves and floral tissues, and, to a lower extent, in roots.

It localises to the secreted. This is S-protein homolog 8 from Arabidopsis thaliana (Mouse-ear cress).